The primary structure comprises 224 residues: Uridylate kinase (224 aa).

9–10 (GS) is a binding site for ATP. Gly-43 lines the UMP pocket. Residues Gly-44 and Arg-48 each coordinate ATP. UMP is bound by residues Asp-65 and 113–119 (TEPAHST). Positions 139, 145, and 148 each coordinate ATP.

Belongs to the UMP kinase family. Homohexamer.

Its subcellular location is the cytoplasm. It catalyses the reaction UMP + ATP = UDP + ADP. It functions in the pathway pyrimidine metabolism; CTP biosynthesis via de novo pathway; UDP from UMP (UMPK route): step 1/1. Inhibited by UTP. Functionally, catalyzes the reversible phosphorylation of UMP to UDP. The sequence is that of Uridylate kinase from Methanothermobacter thermautotrophicus (strain ATCC 29096 / DSM 1053 / JCM 10044 / NBRC 100330 / Delta H) (Methanobacterium thermoautotrophicum).